A 242-amino-acid polypeptide reads, in one-letter code: Biosynthetic peptidoglycan transglycosylase (242 aa).

Residues 12 to 31 (LLFWLMLASALLVLALRWLP) traverse the membrane as a helical segment.

It belongs to the glycosyltransferase 51 family.

Its subcellular location is the cell inner membrane. It catalyses the reaction [GlcNAc-(1-&gt;4)-Mur2Ac(oyl-L-Ala-gamma-D-Glu-L-Lys-D-Ala-D-Ala)](n)-di-trans,octa-cis-undecaprenyl diphosphate + beta-D-GlcNAc-(1-&gt;4)-Mur2Ac(oyl-L-Ala-gamma-D-Glu-L-Lys-D-Ala-D-Ala)-di-trans,octa-cis-undecaprenyl diphosphate = [GlcNAc-(1-&gt;4)-Mur2Ac(oyl-L-Ala-gamma-D-Glu-L-Lys-D-Ala-D-Ala)](n+1)-di-trans,octa-cis-undecaprenyl diphosphate + di-trans,octa-cis-undecaprenyl diphosphate + H(+). It functions in the pathway cell wall biogenesis; peptidoglycan biosynthesis. Its function is as follows. Peptidoglycan polymerase that catalyzes glycan chain elongation from lipid-linked precursors. This Ectopseudomonas mendocina (strain ymp) (Pseudomonas mendocina) protein is Biosynthetic peptidoglycan transglycosylase.